The primary structure comprises 404 residues: Cysteine desulfurase IscS (404 aa).

Pyridoxal 5'-phosphate-binding positions include 75–76, asparagine 155, glutamine 183, and 203–205; these read AT and SGH. An N6-(pyridoxal phosphate)lysine modification is found at lysine 206. Residue threonine 243 participates in pyridoxal 5'-phosphate binding. Catalysis depends on cysteine 328, which acts as the Cysteine persulfide intermediate. Cysteine 328 contributes to the [2Fe-2S] cluster binding site.

The protein belongs to the class-V pyridoxal-phosphate-dependent aminotransferase family. NifS/IscS subfamily. Homodimer. Forms a heterotetramer with IscU, interacts with other sulfur acceptors. Requires pyridoxal 5'-phosphate as cofactor.

The protein localises to the cytoplasm. The catalysed reaction is (sulfur carrier)-H + L-cysteine = (sulfur carrier)-SH + L-alanine. It functions in the pathway cofactor biosynthesis; iron-sulfur cluster biosynthesis. Functionally, master enzyme that delivers sulfur to a number of partners involved in Fe-S cluster assembly, tRNA modification or cofactor biosynthesis. Catalyzes the removal of elemental sulfur atoms from cysteine to produce alanine. Functions as a sulfur delivery protein for Fe-S cluster synthesis onto IscU, an Fe-S scaffold assembly protein, as well as other S acceptor proteins. The sequence is that of Cysteine desulfurase IscS from Shewanella oneidensis (strain ATCC 700550 / JCM 31522 / CIP 106686 / LMG 19005 / NCIMB 14063 / MR-1).